A 340-amino-acid polypeptide reads, in one-letter code: MILSQRRMLSSKQLIENLIRYKFHKTPYTRSSIWPFKRNSAVIILLFIGMKGELRVLLTKRSRTLRSFSGDVSFPGGKADYFQETFESVARREAEEEIGLPHDPEVLHKEFGMKLDNLVMDMPCYLSRTFLSVKPMVCFLYKDKLEKHEDKYKVPLDIRKFFGKLNPGETSSLFSVPLNDLVIHLLPEADEDVKSYQAEYFERKEYKLNWGGIKWLIMHYHFHVANNNEMPWLQTIEDLSSSDEDGVDGGIFRFRDLWGLTCKILFDVSCIANGLMDEKLKGELGHEDLIVGLHDYGNQMQPNGRSEWEIGMINGDRNLKYSDVIPEYYMKHLLECRSLW.

The N-terminal 7 residues, 1–7 (MILSQRR), are a transit peptide targeting the peroxisome. The Nudix hydrolase domain occupies 37–199 (KRNSAVIILL…DEDVKSYQAE (163 aa)). Residues 77-99 (GKADYFQETFESVARREAEEEIG) carry the Nudix box motif. 2 residues coordinate Mg(2+): Glu-93 and Glu-97.

It belongs to the Nudix hydrolase family. PCD1 subfamily. Mn(2+) is required as a cofactor. Requires Mg(2+) as cofactor. The size of the cleaved transit peptide can be of 7 or 8 residues.

The protein resides in the peroxisome. The enzyme catalyses CoA + H2O = (R)-4'-phosphopantetheine + adenosine 3',5'-bisphosphate + 2 H(+). It carries out the reaction CoA-disulfide + H2O = 4'-phosphopantetheinyl-CoA disulfide + adenosine 3',5'-bisphosphate + 2 H(+). It catalyses the reaction 8-oxo-dGTP + H2O = 8-oxo-dGMP + diphosphate + H(+). The catalysed reaction is 2-oxo-dATP + H2O = 2-oxo-dAMP + diphosphate + H(+). Functionally, diphosphatase (pyrophosphatase) with specificity for coenzyme A and CoA derivatives. Catalyzes the hydrolysis of the diphosphate linkage in CoA to give 3',5'-ADP and 4'-phosphopantetheine. Prefers oxidized CoA disulfide (CoASSCoA) over CoA as a substrate. May be required to remove potentially toxic oxidized CoA disulfide from peroxisomes to maintain the capacity for beta-oxidation of fatty acids. Can also hydrolyze 8-oxo-dGTP and 2-OH-dATP in vitro; therefore it may function as a sanitizing enzyme for oxidized nucleotides and may contribute to prevention of spontaneous mutagenesis due to the misincorporation of these oxidized nucleotides during DNA synthesis. Shows moderate activity in vitro with several short chain acyl-CoA esters and very low activity on 3'-dephospho-CoA while is not active with (deoxy)nucleoside 5'-triphosphates, nucleoside 5'-di- or monophosphates, diadenosine polyphosphates, nucleoside 5'-diphosphosugars, cytidine 5'-diphosphoalcohols, NAD(+), NADH, or FAD. The protein is Peroxisomal coenzyme A diphosphatase 1, peroxisomal (PCD1) of Saccharomyces cerevisiae (strain ATCC 204508 / S288c) (Baker's yeast).